The primary structure comprises 556 residues: MLRSSAITQGIQRSPNRAMLRAVGFNDNDFNKPIIGIANGYSTITPCNVGLNNLALHAEASTKVSGAMPQMFGTITVSDGISMGTEGMKYSLVSREVIADSIETACNAQSMDGVLAIGGCDKNMPGAMIAMARMNIPAIFVYGGTIKPGKLDGCDLTVVSAFEAVGQLTSGKITEDKLIAVEKNCIPGAGSCGGMFTANTMSAAIETLGLSLPYSSTMAAEDKEKIESAERSAKVLVDAIEKNIRPLDLLTKKSFENAIAVVMAVGGSTNAVLHLLAIARSSGVDLCIDDFERIRQKVPVICDLKPSGKYVTVDLHKAGGIPQVMKLLLDAGLLHGDCLTIEGITIDESLKNIPSEPPANQNVISPITKPIYKKGHLAILKGNLATEGCVAKISGIRTPVLKGPAKVFESEEDCLDAILKEQIQEGDVIVIRNEGPVGGPGMREMLAPTSAIVGQGLGDKVALITDGRFSGGTYGLVVGHIAPEASVGGNIALVKEGDMITVDAHKKLIQLEVDEKELSKRRTLWEKPEVKYKTGILGKYARLVSSSSKGAVTDQP.

A [2Fe-2S] cluster-binding site is contributed by Cys47. Asp79 is a binding site for Mg(2+). Cys120 is a binding site for [2Fe-2S] cluster. Mg(2+) contacts are provided by Asp121 and Lys122. Position 122 is an N6-carboxylysine (Lys122). Cys192 contacts [2Fe-2S] cluster. Glu444 contacts Mg(2+). The active-site Proton acceptor is Ser470.

The protein belongs to the IlvD/Edd family. Homodimer. It depends on [2Fe-2S] cluster as a cofactor. Mg(2+) serves as cofactor.

The enzyme catalyses (2R)-2,3-dihydroxy-3-methylbutanoate = 3-methyl-2-oxobutanoate + H2O. It catalyses the reaction (2R,3R)-2,3-dihydroxy-3-methylpentanoate = (S)-3-methyl-2-oxopentanoate + H2O. It participates in amino-acid biosynthesis; L-isoleucine biosynthesis; L-isoleucine from 2-oxobutanoate: step 3/4. The protein operates within amino-acid biosynthesis; L-valine biosynthesis; L-valine from pyruvate: step 3/4. Its function is as follows. Functions in the biosynthesis of branched-chain amino acids. Catalyzes the dehydration of (2R,3R)-2,3-dihydroxy-3-methylpentanoate (2,3-dihydroxy-3-methylvalerate) into 2-oxo-3-methylpentanoate (2-oxo-3-methylvalerate) and of (2R)-2,3-dihydroxy-3-methylbutanoate (2,3-dihydroxyisovalerate) into 2-oxo-3-methylbutanoate (2-oxoisovalerate), the penultimate precursor to L-isoleucine and L-valine, respectively. The polypeptide is Dihydroxy-acid dehydratase (Prochlorococcus marinus (strain MIT 9211)).